A 175-amino-acid chain; its full sequence is Crossover junction endodeoxyribonuclease RuvC (175 aa).

Catalysis depends on residues Asp-12, Glu-72, and Asp-144. The Mg(2+) site is built by Asp-12, Glu-72, and Asp-144.

This sequence belongs to the RuvC family. Homodimer which binds Holliday junction (HJ) DNA. The HJ becomes 2-fold symmetrical on binding to RuvC with unstacked arms; it has a different conformation from HJ DNA in complex with RuvA. In the full resolvosome a probable DNA-RuvA(4)-RuvB(12)-RuvC(2) complex forms which resolves the HJ. Mg(2+) serves as cofactor.

It is found in the cytoplasm. The enzyme catalyses Endonucleolytic cleavage at a junction such as a reciprocal single-stranded crossover between two homologous DNA duplexes (Holliday junction).. In terms of biological role, the RuvA-RuvB-RuvC complex processes Holliday junction (HJ) DNA during genetic recombination and DNA repair. Endonuclease that resolves HJ intermediates. Cleaves cruciform DNA by making single-stranded nicks across the HJ at symmetrical positions within the homologous arms, yielding a 5'-phosphate and a 3'-hydroxyl group; requires a central core of homology in the junction. The consensus cleavage sequence is 5'-(A/T)TT(C/G)-3'. Cleavage occurs on the 3'-side of the TT dinucleotide at the point of strand exchange. HJ branch migration catalyzed by RuvA-RuvB allows RuvC to scan DNA until it finds its consensus sequence, where it cleaves and resolves the cruciform DNA. This is Crossover junction endodeoxyribonuclease RuvC from Beijerinckia indica subsp. indica (strain ATCC 9039 / DSM 1715 / NCIMB 8712).